The following is a 247-amino-acid chain: 2,3-bisphosphoglycerate-dependent phosphoglycerate mutase (247 aa).

Residues 8–15 (RHGESVWN), 21–22 (TG), R60, 87–90 (ERHY), K98, 114–115 (RR), and 183–184 (GN) contribute to the substrate site. The active-site Tele-phosphohistidine intermediate is H9. E87 (proton donor/acceptor) is an active-site residue.

It belongs to the phosphoglycerate mutase family. BPG-dependent PGAM subfamily.

The enzyme catalyses (2R)-2-phosphoglycerate = (2R)-3-phosphoglycerate. The protein operates within carbohydrate degradation; glycolysis; pyruvate from D-glyceraldehyde 3-phosphate: step 3/5. Catalyzes the interconversion of 2-phosphoglycerate and 3-phosphoglycerate. The polypeptide is 2,3-bisphosphoglycerate-dependent phosphoglycerate mutase (Thermobifida fusca (strain YX)).